A 213-amino-acid polypeptide reads, in one-letter code: Protein GrpE (213 aa).

Positions 1–23 (MSDEKKPEAETSESLQKREEKLA) are enriched in basic and acidic residues. Residues 1–43 (MSDEKKPEAETSESLQKREEKLAETLASEPAAQGEAEDAAAAG) form a disordered region. Low complexity predominate over residues 29-43 (EPAAQGEAEDAAAAG).

It belongs to the GrpE family. Homodimer.

Its subcellular location is the cytoplasm. Functionally, participates actively in the response to hyperosmotic and heat shock by preventing the aggregation of stress-denatured proteins, in association with DnaK and GrpE. It is the nucleotide exchange factor for DnaK and may function as a thermosensor. Unfolded proteins bind initially to DnaJ; upon interaction with the DnaJ-bound protein, DnaK hydrolyzes its bound ATP, resulting in the formation of a stable complex. GrpE releases ADP from DnaK; ATP binding to DnaK triggers the release of the substrate protein, thus completing the reaction cycle. Several rounds of ATP-dependent interactions between DnaJ, DnaK and GrpE are required for fully efficient folding. This chain is Protein GrpE, found in Parvibaculum lavamentivorans (strain DS-1 / DSM 13023 / NCIMB 13966).